The chain runs to 866 residues: Probable beta-glucosidase F (866 aa).

An N-terminal signal peptide occupies residues 1 to 20 (MAAFPAYLALLSYLVPGALS). Residues N65, N73, and N257 are each glycosylated (N-linked (GlcNAc...) asparagine). D285 is an active-site residue. 8 N-linked (GlcNAc...) asparagine glycosylation sites follow: N328, N360, N395, N421, N474, N659, N664, and N724. The disordered stretch occupies residues 725–748 (SSKTYPYPDGYTTEPKPAPRAGGA).

It belongs to the glycosyl hydrolase 3 family.

It is found in the secreted. It carries out the reaction Hydrolysis of terminal, non-reducing beta-D-glucosyl residues with release of beta-D-glucose.. Its pathway is glycan metabolism; cellulose degradation. Beta-glucosidases are one of a number of cellulolytic enzymes involved in the degradation of cellulosic biomass. Catalyzes the last step releasing glucose from the inhibitory cellobiose. The chain is Probable beta-glucosidase F (bglF) from Aspergillus flavus (strain ATCC 200026 / FGSC A1120 / IAM 13836 / NRRL 3357 / JCM 12722 / SRRC 167).